The primary structure comprises 216 residues: Calcium-binding protein 2 (216 aa).

The disordered stretch occupies residues 1–41 (MGNCAKTPWHRGSKERWQWPGSPLGGSRPSPGPRTEEQEGT). Residue Gly2 is the site of N-myristoyl glycine attachment. A compositionally biased stretch (low complexity) spans 20–29 (PGSPLGGSRP). EF-hand domains lie at 74-109 (EEIE…LGYM), 125-142 (GKVD…KLLA), 148-183 (IGVR…LLGE), and 185-216 (LSQR…MMSR). Asp87, Asp89, Asp91, Tyr93, and Glu98 together coordinate Ca(2+). 9 residues coordinate Ca(2+): Asp161, Asn163, Asp165, Cys167, Glu172, Asp198, Asn200, Asp202, and Glu209.

As to expression, expressed in the inner hair cells (IHCs), outer hair cells,(OHCs) and vestibular hair cells within the ear and in the retina (at protein level). Expressed in the retinal cone type 6 ON-bipolar cells and type 1 OFF-bipolar cells (at protein level). Expressed in the organ of Corti and spiral ganglion neurons in the cochlea (at protein level).

The protein resides in the cytoplasm. It localises to the perinuclear region. The protein localises to the cell membrane. It is found in the golgi apparatus. Functionally, required for sound encoding at inner hair cells (IHCs) synapses, likely via inhibition of the inactivation of voltage-gated calcium channel of type 1.3 (Cav1.3) in the IHCs. Required for the normal transfer of light signals through the retina. The chain is Calcium-binding protein 2 (Cabp2) from Mus musculus (Mouse).